The primary structure comprises 188 residues: Apolipoprotein M (188 aa).

A signal peptide (not cleaved) is located at residues 1–22 (MFHQIWAALLYFYGIILNSIYQ). 3 disulfides stabilise this stretch: cysteine 23/cysteine 167, cysteine 95/cysteine 183, and cysteine 128/cysteine 157. An N-linked (GlcNAc...) asparagine glycan is attached at asparagine 135. 2 residues coordinate tetradecanoate: glutamate 136 and arginine 143.

The protein belongs to the calycin superfamily. Lipocalin family. Highly divergent. Interacts with LRP2; LRP2 mediates APOM renal uptake and subsequent lysosomal degradation.

Its subcellular location is the secreted. Its function is as follows. Probably involved in lipid transport. Can bind sphingosine-1-phosphate, myristic acid, palmitic acid and stearic acid, retinol, all-trans-retinoic acid and 9-cis-retinoic acid. In Pongo abelii (Sumatran orangutan), this protein is Apolipoprotein M (APOM).